The sequence spans 304 residues: Putative ankyrin repeat protein R602 (304 aa).

ANK repeat units follow at residues Leu82–Phe117, Asn118–Ala146, Asp147–Cys176, Asp178–Ala206, Gly207–Asp236, and Ser238–Thr266.

This is Putative ankyrin repeat protein R602 from Acanthamoeba polyphaga (Amoeba).